Consider the following 218-residue polypeptide: Akirin (218 aa).

The segment at 96–150 is disordered; that stretch reads KAIPRSNDFDDDGDQRGDGCSSNYSKAYRAPSSPKSGSDSEGEAPSTSVTDRSSA. The span at 128-147 shows a compositional bias: polar residues; the sequence is SPKSGSDSEGEAPSTSVTDR.

It belongs to the akirin family. As to quaternary structure, interacts with hda-1, a component of the NuRD complex. Interacts with let-418, a component of the NuRD and MEC complexes. Interacts with the transcription factor ceh-18. Interacts with ima-2. Localizes to somatic tissues throughout the body, including muscle cells. Expressed in lateral epithelial seam cells, the hyp7 epidermal syncytium, and multiple head and tail neurons.

It is found in the nucleus. Molecular adapter that acts as a bridge between a variety of multiprotein complexes, and which is involved in antifungal innate immunity, development of the muscle and sister chromatid cohesion. Plays a role in antifungal innate immunity by acting as a bridge between components of the NuRD (Nucleosome Remodeling and Deacetylase) and MEC chromatin remodeling complexes. NuRD and MEC complexes bind to the promoters of antimicrobial peptide genes and may recruit other proteins such as ceh-18 to control gene expression in response to fungal infection. During meiotic prophase I, plays a role in the disassembly of synaptonemal complex proteins and in the regulation of chromosome condensation and segregation. Together with nuclear import receptor ima-2, required for the import and load of cohesin complex proteins in meiotic nuclei, possibly by acting as a bridge between ima-2 and cohesins. Required for embryonic development of muscle tissue. The chain is Akirin from Caenorhabditis elegans.